Here is a 454-residue protein sequence, read N- to C-terminus: Bifunctional protein GlmU (454 aa).

The segment at 1–228 (MTLPLHVVIL…PQDVEGANDP (228 aa)) is pyrophosphorylase. Residues 10–13 (LAAG), Lys-24, Gln-76, 81–82 (GT), 103–105 (YGD), Gly-138, Glu-153, Asn-168, and Asn-226 each bind UDP-N-acetyl-alpha-D-glucosamine. Position 105 (Asp-105) interacts with Mg(2+). Residue Asn-226 coordinates Mg(2+). The tract at residues 229–249 (WQLAQLERAWQLRAARALCLQ) is linker. Positions 250–454 (GVRMADPARV…IEGWERPKKK (205 aa)) are N-acetyltransferase. UDP-N-acetyl-alpha-D-glucosamine-binding residues include Arg-332 and Lys-350. The Proton acceptor role is filled by His-362. UDP-N-acetyl-alpha-D-glucosamine-binding residues include Tyr-365 and Asn-376. Residues Ala-379, 385–386 (NY), Ser-404, Ala-422, and Arg-439 contribute to the acetyl-CoA site.

This sequence in the N-terminal section; belongs to the N-acetylglucosamine-1-phosphate uridyltransferase family. In the C-terminal section; belongs to the transferase hexapeptide repeat family. Homotrimer. Mg(2+) is required as a cofactor.

It is found in the cytoplasm. It carries out the reaction alpha-D-glucosamine 1-phosphate + acetyl-CoA = N-acetyl-alpha-D-glucosamine 1-phosphate + CoA + H(+). The enzyme catalyses N-acetyl-alpha-D-glucosamine 1-phosphate + UTP + H(+) = UDP-N-acetyl-alpha-D-glucosamine + diphosphate. The protein operates within nucleotide-sugar biosynthesis; UDP-N-acetyl-alpha-D-glucosamine biosynthesis; N-acetyl-alpha-D-glucosamine 1-phosphate from alpha-D-glucosamine 6-phosphate (route II): step 2/2. It functions in the pathway nucleotide-sugar biosynthesis; UDP-N-acetyl-alpha-D-glucosamine biosynthesis; UDP-N-acetyl-alpha-D-glucosamine from N-acetyl-alpha-D-glucosamine 1-phosphate: step 1/1. Its pathway is bacterial outer membrane biogenesis; LPS lipid A biosynthesis. Functionally, catalyzes the last two sequential reactions in the de novo biosynthetic pathway for UDP-N-acetylglucosamine (UDP-GlcNAc). The C-terminal domain catalyzes the transfer of acetyl group from acetyl coenzyme A to glucosamine-1-phosphate (GlcN-1-P) to produce N-acetylglucosamine-1-phosphate (GlcNAc-1-P), which is converted into UDP-GlcNAc by the transfer of uridine 5-monophosphate (from uridine 5-triphosphate), a reaction catalyzed by the N-terminal domain. The polypeptide is Bifunctional protein GlmU (Xanthomonas campestris pv. campestris (strain B100)).